The chain runs to 457 residues: Adenylyltransferase and sulfurtransferase MOCS3 (457 aa).

The interval 40-60 is disordered; that stretch reads ANGGGNGDGLADEGGERNTGT. Threonine 63 is subject to Phosphothreonine. ATP contacts are provided by residues glycine 102, aspartate 123, 130–134, lysine 147, and 191–192; these read SNFHR and DN. The Zn(2+) site is built by cysteine 233 and cysteine 236. Cysteine 250 (glycyl thioester intermediate; for adenylyltransferase activity) is an active-site residue. The Zn(2+) site is built by cysteine 309 and cysteine 312. The 98-residue stretch at 358-455 folds into the Rhodanese domain; the sequence is ESQPHLLFDV…WTRKVDPDFP (98 aa). Residue cysteine 414 is the Cysteine persulfide intermediate; for sulfurtransferase activity of the active site.

The protein in the N-terminal section; belongs to the HesA/MoeB/ThiF family. UBA4 subfamily. Zn(2+) serves as cofactor.

Its subcellular location is the cytoplasm. The protein localises to the cytosol. The enzyme catalyses [molybdopterin-synthase sulfur-carrier protein]-C-terminal Gly-Gly + ATP + H(+) = [molybdopterin-synthase sulfur-carrier protein]-C-terminal Gly-Gly-AMP + diphosphate. It catalyses the reaction [molybdopterin-synthase sulfur-carrier protein]-C-terminal Gly-Gly-AMP + S-sulfanyl-L-cysteinyl-[cysteine desulfurase] + AH2 = [molybdopterin-synthase sulfur-carrier protein]-C-terminal-Gly-aminoethanethioate + L-cysteinyl-[cysteine desulfurase] + A + AMP + 2 H(+). Its pathway is tRNA modification; 5-methoxycarbonylmethyl-2-thiouridine-tRNA biosynthesis. It functions in the pathway cofactor biosynthesis; molybdopterin biosynthesis. Plays a central role in 2-thiolation of mcm(5)S(2)U at tRNA wobble positions of cytosolic tRNA(Lys), tRNA(Glu) and tRNA(Gln). Also essential during biosynthesis of the molybdenum cofactor. Acts by mediating the C-terminal thiocarboxylation of sulfur carriers URM1 and MOCS2A. Its N-terminus first activates URM1 and MOCS2A as acyl-adenylates (-COAMP), then the persulfide sulfur on the catalytic cysteine is transferred to URM1 and MOCS2A to form thiocarboxylation (-COSH) of their C-terminus. The reaction probably involves hydrogen sulfide that is generated from the persulfide intermediate and that acts as a nucleophile towards URM1 and MOCS2A. Subsequently, a transient disulfide bond is formed. Does not use thiosulfate as sulfur donor; NFS1 probably acting as a sulfur donor for thiocarboxylation reactions. The protein is Adenylyltransferase and sulfurtransferase MOCS3 of Drosophila willistoni (Fruit fly).